We begin with the raw amino-acid sequence, 221 residues long: Jacalin-related lectin 47 (221 aa).

Jacalin-type lectin domains lie at Met-1–Pro-64 and Ser-71–Pro-217.

Belongs to the jacalin lectin family.

The polypeptide is Jacalin-related lectin 47 (JAL47) (Arabidopsis thaliana (Mouse-ear cress)).